A 373-amino-acid chain; its full sequence is Histidinol-phosphate aminotransferase (373 aa).

Residues 1-10 (MTGVPGSSIT) are compositionally biased toward polar residues. Residues 1–45 (MTGVPGSSITLDDLPLRDDLRGKSPYGAPQLSVPVRLNTNENPHP) form a disordered region. K237 is subject to N6-(pyridoxal phosphate)lysine.

The protein belongs to the class-II pyridoxal-phosphate-dependent aminotransferase family. Histidinol-phosphate aminotransferase subfamily. Homodimer. Requires pyridoxal 5'-phosphate as cofactor.

It carries out the reaction L-histidinol phosphate + 2-oxoglutarate = 3-(imidazol-4-yl)-2-oxopropyl phosphate + L-glutamate. It functions in the pathway amino-acid biosynthesis; L-histidine biosynthesis; L-histidine from 5-phospho-alpha-D-ribose 1-diphosphate: step 7/9. The sequence is that of Histidinol-phosphate aminotransferase from Mycolicibacterium vanbaalenii (strain DSM 7251 / JCM 13017 / BCRC 16820 / KCTC 9966 / NRRL B-24157 / PYR-1) (Mycobacterium vanbaalenii).